The chain runs to 178 residues: RNA pyrophosphohydrolase (178 aa).

The Nudix hydrolase domain occupies 18–171 (PYRPCVGLMV…KRKVYEQVVA (154 aa)). A Nudix box motif is present at residues 59–80 (GGIDKGEDPAQAALRELYEETG).

It belongs to the Nudix hydrolase family. RppH subfamily. A divalent metal cation is required as a cofactor.

In terms of biological role, accelerates the degradation of transcripts by removing pyrophosphate from the 5'-end of triphosphorylated RNA, leading to a more labile monophosphorylated state that can stimulate subsequent ribonuclease cleavage. This is RNA pyrophosphohydrolase from Brucella abortus (strain 2308).